Reading from the N-terminus, the 164-residue chain is MPGFIGREQHTVDDKGRLLIPARFRRKFLRQKDEESAEKAKRHEVLYVFKADDGSLELYEPAVWNEKEHQLLKLSDFNPEERLLTTMIYARLDQLELDRSGRIALSREMLDHAGIEREAVVIGANAKMIVWNPDRLTQLLADNAGSFSGLANRYVKGDGKSGVS.

SpoVT-AbrB domains follow at residues 7–63 and 92–135; these read REQH…EPAV and LDQL…NPDR.

The protein belongs to the MraZ family. In terms of assembly, forms oligomers.

It localises to the cytoplasm. It is found in the nucleoid. This is Transcriptional regulator MraZ from Chlorobaculum parvum (strain DSM 263 / NCIMB 8327) (Chlorobium vibrioforme subsp. thiosulfatophilum).